Consider the following 293-residue polypeptide: Elongation factor Ts (293 aa).

The tract at residues 80–83 is involved in Mg(2+) ion dislocation from EF-Tu; the sequence is TDFV.

It belongs to the EF-Ts family.

It localises to the cytoplasm. Functionally, associates with the EF-Tu.GDP complex and induces the exchange of GDP to GTP. It remains bound to the aminoacyl-tRNA.EF-Tu.GTP complex up to the GTP hydrolysis stage on the ribosome. The chain is Elongation factor Ts from Aeromonas hydrophila subsp. hydrophila (strain ATCC 7966 / DSM 30187 / BCRC 13018 / CCUG 14551 / JCM 1027 / KCTC 2358 / NCIMB 9240 / NCTC 8049).